We begin with the raw amino-acid sequence, 200 residues long: Casparian strip membrane protein 1 (200 aa).

Residues 1–38 (MSTTIEIPAESSAVAKGKAPLIGASSSSYEKKGGYKKG) lie on the Cytoplasmic side of the membrane. Residues 39 to 59 (IAIFDFILRLGAVISALSAAA) form a helical membrane-spanning segment. Topologically, residues 60 to 88 (TMGTSDETLPFFTQFFQFEAGYDDFPTFQ) are extracellular. Residues 89–109 (FFVIAMGFVGGYLVLSLPFSV) form a helical membrane-spanning segment. The Cytoplasmic portion of the chain corresponds to 110 to 121 (VAIIRPHAVGIR). Residues 122 to 142 (LLLLILDTVALTLNTAAAAAA) traverse the membrane as a helical segment. At 143 to 175 (AAIVYLAHNGNQSANWLAVCQQFGDFCQKVSGG) the chain is on the extracellular side. N-linked (GlcNAc...) asparagine glycosylation occurs at N153. A helical membrane pass occupies residues 176–196 (VVASFVSVLVFLLLVVMSAVA). Over 197–200 (LRKH) the chain is Cytoplasmic.

It belongs to the Casparian strip membrane proteins (CASP) family. In terms of assembly, homodimer and heterodimers.

It is found in the cell membrane. Functionally, regulates membrane-cell wall junctions and localized cell wall deposition. Required for establishment of the Casparian strip membrane domain (CSD) and the subsequent formation of Casparian strips, a cell wall modification of the root endodermis that determines an apoplastic barrier between the intraorganismal apoplasm and the extraorganismal apoplasm and prevents lateral diffusion. The sequence is that of Casparian strip membrane protein 1 from Ricinus communis (Castor bean).